Here is a 90-residue protein sequence, read N- to C-terminus: U7-theraphotoxin-Hhn1g (90 aa).

A signal peptide spans 1–19 (MKTAIFTVVLALAVFAVLS). Residues 20–50 (FGWEANEKALSEEFTELIHEKEAASETEARE) constitute a propeptide that is removed on maturation. 3 disulfide bridges follow: Cys-51–Cys-65, Cys-58–Cys-70, and Cys-64–Cys-81.

Belongs to the neurotoxin 10 (Hwtx-1) family. 13 (Hntx-13) subfamily. In terms of tissue distribution, expressed by the venom gland.

Its subcellular location is the secreted. Ion channel inhibitor. This chain is U7-theraphotoxin-Hhn1g, found in Cyriopagopus hainanus (Chinese bird spider).